The primary structure comprises 207 residues: Probable glutathione S-transferase 5 (207 aa).

Positions 2–81 (VSYKLTYFNG…FLAREFKLNG (80 aa)) constitute a GST N-terminal domain. Residues Tyr-8, Trp-39, Lys-43, 51-53 (GQL), and 65-66 (QS) each bind glutathione. A GST C-terminal domain is found at 83–207 (TAWEEAQVNS…WIETRPVTPF (125 aa)).

This sequence belongs to the GST superfamily. Sigma family.

The enzyme catalyses RX + glutathione = an S-substituted glutathione + a halide anion + H(+). Conjugation of reduced glutathione to a wide number of exogenous and endogenous hydrophobic electrophiles. May play a role in the detoxification of reactive oxygen species produced during pathogenic bacterial infection. This Caenorhabditis elegans protein is Probable glutathione S-transferase 5 (gst-5).